The primary structure comprises 1581 residues: Mediator of RNA polymerase II transcription subunit 1 (1581 aa).

The interval 1-670 (MKAQGETEES…YGSSPLERQN (670 aa)) is interaction with the Mediator complex and THRA. Residues 16–590 (MSSLLERLHA…SIKDRHESVG (575 aa)) are interaction with ESR1. Interaction with the Mediator complex regions lie at residues 108–212 (FYVE…GYLT) and 215–390 (SGGH…SLQG). Residues 405–644 (PLILNLIRHQ…MAGNTKNHPM (240 aa)) form an interaction with THRA region. Residues 542–789 (PASSPGYGMT…TDILSDIAEE (248 aa)) form an interaction with VDR region. S588 bears the Phosphoserine mark. The short motif at 604–608 (LTSLL) is the LXXLL motif 1 element. Disordered stretches follow at residues 609–705 (QITG…HQTE), 792–820 (KLPS…QSTL), 874–893 (SQSG…GDND), and 948–1566 (EHHS…DFMI). Residues 622-632 (PTPPHHTPPPV) show a composition bias toward pro residues. An interaction with PPARGC1A and THRA region spans residues 622 to 701 (PTPPHHTPPP…SSRLPPEKPK (80 aa)). The LXXLL motif 2 signature appears at 645–649 (LMNLL). The segment covering 655–675 (QDFSTLYGSSPLERQNSSSGS) has biased composition (polar residues). The tract at residues 656 to 1066 (DFSTLYGSSP…TPPIPKITIQ (411 aa)) is interaction with ESR1. S664 carries the post-translational modification Phosphoserine. Positions 681-715 (CSGSNKTKKKKSSRLPPEKPKHQTEDDFQRELFSM) are interaction with GATA1. A compositionally biased stretch (basic and acidic residues) spans 696–705 (PPEKPKHQTE). The residue at position 795 (S795) is a Phosphoserine. T805 carries the phosphothreonine modification. The segment covering 808 to 820 (RDSSSSGHSQSTL) has biased composition (polar residues). Residues 875–902 (QSGFGEEYFDESSQSGDNDDFKGFASQA) carry the Integrase domain-binding motif (IBM) motif. Phosphoserine occurs at positions 887 and 953. A compositionally biased stretch (basic and acidic residues) spans 963 to 974 (LGKEKTQKRVKE). The residue at position 1032 (T1032) is a Phosphothreonine; by MAPK1 or MAPK3. Residues 1034-1045 (PTSTGGSKSPGS) show a composition bias toward low complexity. A phosphothreonine mark is found at T1051 and T1057. 2 stretches are compositionally biased toward low complexity: residues 1078–1094 (SSHS…SSGS) and 1101–1156 (SSSS…PGSS). Phosphoserine is present on S1156. The segment covering 1162-1195 (GLSSGSSSTKMKPQGKPSSLMNPSLSKPNISPSH) has biased composition (polar residues). K1177 bears the N6-acetyllysine mark. Position 1207 is a phosphoserine (S1207). T1215 bears the Phosphothreonine mark. Composition is skewed to low complexity over residues 1218 to 1227 (SSKAKSPISS) and 1234 to 1293 (MSGT…SKGK). S1223 carries the post-translational modification Phosphoserine. The interaction with TP53 stretch occupies residues 1249 to 1421 (LGSSGSLSQK…KPGESSGEGL (173 aa)). S1302 is modified (phosphoserine). The span at 1330 to 1345 (GVSTNSSSHPMSSKHN) shows a compositional bias: polar residues. Residue S1347 is modified to Phosphoserine. A compositionally biased stretch (basic and acidic residues) spans 1352 to 1364 (QGKREKSDKDKSK). A phosphoserine mark is found at S1403 and S1433. 2 stretches are compositionally biased toward polar residues: residues 1425–1440 (MASS…SGST) and 1448–1482 (PSHS…SPSS). T1440 is subject to Phosphothreonine. Phosphothreonine; by MAPK1 or MAPK3 is present on T1457. Residues S1463, S1465, S1479, S1481, and S1482 each carry the phosphoserine modification. A compositionally biased stretch (basic residues) spans 1496–1505 (KHKKHKKEKK). Residues 1506 to 1522 (KVKDKDRDRDRDKDRDK) show a composition bias toward basic and acidic residues. The residue at position 1529 (K1529) is an N6-acetyllysine. Residues 1533 to 1552 (WSKSPISSDQSLSMTSNTIL) are compositionally biased toward polar residues.

Belongs to the Mediator complex subunit 1 family. In terms of assembly, component of the Mediator complex, which is composed of MED1, MED4, MED6, MED7, MED8, MED9, MED10, MED11, MED12, MED13, MED13L, MED14, MED15, MED16, MED17, MED18, MED19, MED20, MED21, MED22, MED23, MED24, MED25, MED26, MED27, MED29, MED30, MED31, CCNC, CDK8 and CDC2L6/CDK11. The MED12, MED13, CCNC and CDK8 subunits form a distinct module termed the CDK8 module. Mediator containing the CDK8 module is less active than Mediator lacking this module in supporting transcriptional activation. Individual preparations of the Mediator complex lacking one or more distinct subunits have been variously termed ARC, CRSP, DRIP, PC2, SMCC and TRAP. This subunit specifically interacts with a number of nuclear receptors in a ligand-dependent fashion including AR, ESR1, ESR2, PPARA, PPARG, RORA, RXRA, RXRG, THRA, THRB and VDR. Interacts with CTNNB1, GABPA, GLI3, PPARGC1A and TP53. Interacts with YWHAH. Interacts with CLOCK; this interaction requires the presence of THRAP3. Interacts with GATA1 and CCAR1. Interacts with NR4A3. Interacts (via IBM motif) with PSIP1 (via IBD domain); phosphorylation increases its affinity for PSIP1. Interacts with USP22. In terms of processing, phosphorylated by MAPK1 or MAPK3 during G2/M phase which may enhance protein stability and promote entry into the nucleolus. Phosphorylation increases its interaction with PSIP1. In terms of tissue distribution, ubiquitously expressed.

Its subcellular location is the nucleus. In terms of biological role, component of the Mediator complex, a coactivator involved in the regulated transcription of nearly all RNA polymerase II-dependent genes. Mediator functions as a bridge to convey information from gene-specific regulatory proteins to the basal RNA polymerase II transcription machinery. Mediator is recruited to promoters by direct interactions with regulatory proteins and serves as a scaffold for the assembly of a functional preinitiation complex with RNA polymerase II and the general transcription factors. Acts as a coactivator for GATA1-mediated transcriptional activation during erythroid differentiation of K562 erythroleukemia cells. The polypeptide is Mediator of RNA polymerase II transcription subunit 1 (MED1) (Homo sapiens (Human)).